Consider the following 1216-residue polypeptide: DNA-directed RNA polymerase subunit beta (1216 aa).

Residues 1185–1216 (EEKQELPSQEYESLNLDQELKTASENVSESEF) form a disordered region. Residues 1190–1216 (LPSQEYESLNLDQELKTASENVSESEF) show a composition bias toward polar residues.

It belongs to the RNA polymerase beta chain family. In terms of assembly, the RNAP catalytic core consists of 2 alpha, 1 beta, 1 beta' and 1 omega subunit. When a sigma factor is associated with the core the holoenzyme is formed, which can initiate transcription.

It catalyses the reaction RNA(n) + a ribonucleoside 5'-triphosphate = RNA(n+1) + diphosphate. Its function is as follows. DNA-dependent RNA polymerase catalyzes the transcription of DNA into RNA using the four ribonucleoside triphosphates as substrates. This is DNA-directed RNA polymerase subunit beta from Mycoplasmopsis pulmonis (strain UAB CTIP) (Mycoplasma pulmonis).